A 244-amino-acid chain; its full sequence is Tegument protein UL51 (244 aa).

The S-palmitoyl cysteine; by host moiety is linked to residue Cys9. The tract at residues 178 to 244 (GVTEAPSLGH…SRAAPCVLGQ (67 aa)) is disordered. Over residues 221-244 (PRPTASPTAPRPGPSRAAPCVLGQ) the composition is skewed to low complexity.

This sequence belongs to the herpesviridae UL51 family. As to quaternary structure, oligomerizes. Interacts with UL7; this interaction mediates UL7 incorporation to virions. Interacts with UL14. Post-translationally, phosphorylated. Palmitoylation is necessary for Golgi localization.

It is found in the virion tegument. It localises to the host cytoplasm. The protein resides in the host Golgi apparatus. In terms of biological role, plays several roles during the time course of infection, including egress of virus particles from the perinuclear space and secondary envelopment of cytoplasmic capsids that bud into specific trans-Golgi network (TGN)-derived membranes. Plays also an essential role in the maintenance of host cytoplasmic viral assembly center (cVAC) morphology in primary host neuronal cells. The polypeptide is Tegument protein UL51 (Homo sapiens (Human)).